The following is a 431-amino-acid chain: Tol-Pal system protein TolB (431 aa).

The first 26 residues, 1–26 (MSLMTKLGFRALVASCLIAAGSAANA), serve as a signal peptide directing secretion. Residues 411–431 (PQILSVQGGSVREPSWGPFMQ) are disordered.

It belongs to the TolB family. In terms of assembly, the Tol-Pal system is composed of five core proteins: the inner membrane proteins TolA, TolQ and TolR, the periplasmic protein TolB and the outer membrane protein Pal. They form a network linking the inner and outer membranes and the peptidoglycan layer.

Its subcellular location is the periplasm. Part of the Tol-Pal system, which plays a role in outer membrane invagination during cell division and is important for maintaining outer membrane integrity. The polypeptide is Tol-Pal system protein TolB (Burkholderia multivorans (strain ATCC 17616 / 249)).